We begin with the raw amino-acid sequence, 357 residues long: Metacaspase-3 (357 aa).

Residue histidine 168 is part of the active site. Aspartate 183, aspartate 199, and aspartate 200 together coordinate Ca(2+). Cysteine 223 is an active-site residue. Position 230 (aspartate 230) interacts with Ca(2+).

This sequence belongs to the peptidase C14B family.

The protein localises to the recycling endosome. Its activity is regulated as follows. Activated by Ca(2+). Functionally, cysteine protease that cleaves specifically after arginine or lysine residues. In the bloodstream form, may cleave inactive metacaspase-4 MCA4 prior to MCA4 secretion. The protein is Metacaspase-3 of Trypanosoma brucei brucei.